The following is a 423-amino-acid chain: Gamma-glutamyl phosphate reductase (423 aa).

This sequence belongs to the gamma-glutamyl phosphate reductase family.

Its subcellular location is the cytoplasm. The catalysed reaction is L-glutamate 5-semialdehyde + phosphate + NADP(+) = L-glutamyl 5-phosphate + NADPH + H(+). It functions in the pathway amino-acid biosynthesis; L-proline biosynthesis; L-glutamate 5-semialdehyde from L-glutamate: step 2/2. Functionally, catalyzes the NADPH-dependent reduction of L-glutamate 5-phosphate into L-glutamate 5-semialdehyde and phosphate. The product spontaneously undergoes cyclization to form 1-pyrroline-5-carboxylate. This is Gamma-glutamyl phosphate reductase from Roseiflexus castenholzii (strain DSM 13941 / HLO8).